Consider the following 356-residue polypeptide: Arginine kinase (356 aa).

Ala-2 bears the N-acetylalanine mark. The Phosphagen kinase N-terminal domain occupies 9 to 91; that stretch reads KLEEGFKKLE…FDPIIEDYHK (83 aa). 64-68 serves as a coordination point for L-arginine; sequence GVGIY. Residues 119 to 356 form the Phosphagen kinase C-terminal domain; sequence FVISTRVRCG…LELIKIEKEM (238 aa). ATP contacts are provided by residues 122-126 and His-185; that span reads STRVR. Glu-225 contacts L-arginine. Position 229 (Arg-229) interacts with ATP. Cys-271 provides a ligand contact to L-arginine. ATP is bound by residues 280–284 and 309–314; these read RASVH and RGTRGE. Glu-314 lines the L-arginine pocket.

It belongs to the ATP:guanido phosphotransferase family.

The enzyme catalyses L-arginine + ATP = N(omega)-phospho-L-arginine + ADP + H(+). The protein is Arginine kinase of Homarus gammarus (European lobster).